Here is a 272-residue protein sequence, read N- to C-terminus: 3-methyl-2-oxobutanoate hydroxymethyltransferase (272 aa).

Residues Asp-43 and Asp-82 each contribute to the Mg(2+) site. 3-methyl-2-oxobutanoate-binding positions include 43-44 (DS), Asp-82, and Lys-112. Glu-114 is a binding site for Mg(2+). Glu-179 serves as the catalytic Proton acceptor.

The protein belongs to the PanB family. As to quaternary structure, homodecamer; pentamer of dimers. Requires Mg(2+) as cofactor.

Its subcellular location is the cytoplasm. The catalysed reaction is 3-methyl-2-oxobutanoate + (6R)-5,10-methylene-5,6,7,8-tetrahydrofolate + H2O = 2-dehydropantoate + (6S)-5,6,7,8-tetrahydrofolate. It participates in cofactor biosynthesis; (R)-pantothenate biosynthesis; (R)-pantoate from 3-methyl-2-oxobutanoate: step 1/2. Catalyzes the reversible reaction in which hydroxymethyl group from 5,10-methylenetetrahydrofolate is transferred onto alpha-ketoisovalerate to form ketopantoate. This chain is 3-methyl-2-oxobutanoate hydroxymethyltransferase, found in Staphylococcus aureus (strain COL).